The following is a 142-amino-acid chain: Large ribosomal subunit protein uL11 (142 aa).

The protein belongs to the universal ribosomal protein uL11 family. In terms of assembly, part of the ribosomal stalk of the 50S ribosomal subunit. Interacts with L10 and the large rRNA to form the base of the stalk. L10 forms an elongated spine to which L12 dimers bind in a sequential fashion forming a multimeric L10(L12)X complex. Post-translationally, one or more lysine residues are methylated.

In terms of biological role, forms part of the ribosomal stalk which helps the ribosome interact with GTP-bound translation factors. This Brucella abortus (strain S19) protein is Large ribosomal subunit protein uL11.